Here is a 1764-residue protein sequence, read N- to C-terminus: Latent-transforming growth factor beta-binding protein 2 (1764 aa).

The N-terminal stretch at 1–35 (MRAPTTVRCSGRIQRARWRGFLPLVLALLMGTSHA) is a signal peptide. Residues 80-140 (PGLSPSEWNQ…PPAARTAHSV (61 aa)) form a disordered region. Residues 94–115 (IPGRLAEAEARRPSRAQQLRRV) form a heparin-binding region. Over residues 108-128 (RAQQLRRVQSPVQTRRSNPRG) the composition is skewed to polar residues. An N-linked (GlcNAc...) asparagine glycan is attached at Asn-175. An EGF-like 1 domain is found at 181–213 (IKPVCQPPCQNRGSCSRPQLCICRSGFRGARCE). 3 cysteine pairs are disulfide-bonded: Cys-185–Cys-195, Cys-189–Cys-201, and Cys-203–Cys-212. The disordered stretch occupies residues 220–279 (EFDPQNARPVPRRSVEGAPGPHRSSEARGSLVTRIQPLLPPLPPPPSRTLSQTRPLQQHA). Residues 226–243 (ARPVPRRSVEGAPGPHRS) form a heparin-binding region. Residues 257 to 266 (LLPPLPPPPS) show a composition bias toward pro residues. Residue Asn-330 is glycosylated (N-linked (GlcNAc...) asparagine). 331-341 (LTEKIKKIKVV) lines the heparin pocket. The EGF-like 2 domain maps to 383–415 (RIYFCQIPCLNGGRCIGRDECWCPANSTGKFCH). 3 disulfide bridges follow: Cys-387–Cys-397, Cys-391–Cys-403, and Cys-405–Cys-414. Residue Asn-408 is glycosylated (N-linked (GlcNAc...) asparagine). The disordered stretch occupies residues 484-529 (EVDPVPEDNSVETRASHRPHGSSGHSHWASNSIPARAGEAPRPPPV). Position 493 is a phosphoserine (Ser-493). Residues 538-590 (GQCYLSTVNGQCANPLGELTSQEDCCGSVGTSWGVTSCAPCPPRPAFPVIENG) enclose the TB 1 domain. Disulfide bonds link Cys-540–Cys-562, Cys-549–Cys-575, and Cys-563–Cys-578. Asn-602 carries N-linked (GlcNAc...) asparagine glycosylation. The EGF-like 3; calcium-binding domain maps to 608–648 (DINECLTLGLCKDSECVNTRGSYLCTCRPGLMLDPSRSRCV). Intrachain disulfides connect Cys-612-Cys-623, Cys-618-Cys-632, Cys-634-Cys-647, Cys-660-Cys-682, Cys-669-Cys-695, Cys-683-Cys-698, and Cys-684-Cys-710. The region spanning 658–710 (GLCYRSMVSGTCTLPLVQRITKQICCCSRVGKAWGSKCEHCPLPGTEAFREIC) is the TB 2 domain. Disordered stretches follow at residues 729 to 759 (KAEE…RQPL) and 786 to 809 (SAPH…LPGQ). The EGF-like 4 domain maps to 834 to 876 (GFDPCFAGASNICGPGTCVKLPNGYRCVCSPGYQLHPSQDYCT). Disulfide bonds link Cys-838-Cys-851, Cys-846-Cys-860, Cys-862-Cys-875, Cys-881-Cys-892, Cys-886-Cys-901, Cys-903-Cys-918, Cys-924-Cys-935, Cys-930-Cys-944, Cys-946-Cys-958, Cys-964-Cys-975, Cys-970-Cys-984, Cys-987-Cys-998, Cys-1004-Cys-1015, Cys-1010-Cys-1024, Cys-1026-Cys-1039, Cys-1045-Cys-1056, Cys-1051-Cys-1065, Cys-1068-Cys-1081, Cys-1087-Cys-1098, Cys-1093-Cys-1107, Cys-1110-Cys-1123, Cys-1129-Cys-1141, Cys-1136-Cys-1150, Cys-1152-Cys-1164, Cys-1170-Cys-1182, Cys-1176-Cys-1191, Cys-1193-Cys-1206, Cys-1212-Cys-1223, Cys-1218-Cys-1232, Cys-1234-Cys-1247, Cys-1253-Cys-1265, Cys-1259-Cys-1274, Cys-1276-Cys-1289, Cys-1295-Cys-1307, Cys-1302-Cys-1316, Cys-1318-Cys-1332, Cys-1359-Cys-1382, Cys-1369-Cys-1394, Cys-1383-Cys-1397, Cys-1435-Cys-1448, Cys-1443-Cys-1457, Cys-1459-Cys-1472, Cys-1478-Cys-1488, Cys-1483-Cys-1497, and Cys-1499-Cys-1512. In terms of domain architecture, EGF-like 5; calcium-binding spans 877-919 (DDNECLRNPCEGRGRCVNSVGSYSCLCYPGYTLATLGDTQECQ). The EGF-like 6; calcium-binding domain occupies 920-959 (DVDECEQPGVCSGGRCSNTEGSYHCECDQGYVMVRRGHCQ). Positions 960 to 999 (DINECRHPGTCPDGRCVNSPGSYTCLACEEGYIGQSGNCV) constitute an EGF-like 7; calcium-binding domain. One can recognise an EGF-like 8; calcium-binding domain in the interval 1000 to 1040 (DMNECLTPGICAHGRCINMEGSFRCSCEPGYELTPDKKGCR). Residues 1041–1082 (DVDECASRASCPTGLCLNTEGSFTCSACQSGYWVNEDGTACE) form the EGF-like 9; calcium-binding domain. An EGF-like 10; calcium-binding domain is found at 1083 to 1124 (DLDECAFPGVCPTGVCTNTVGSFSCKDCDRGFRPSPLGNSCE). Residues 1125–1165 (DVDECEGPQNSCLGGECKNTDGSYQCLCPQGFQLANGTVCE) form the EGF-like 11; calcium-binding domain. N-linked (GlcNAc...) asparagine glycosylation occurs at Asn-1160. The 42-residue stretch at 1166–1207 (DVDECVGEEHCAPHGECLNSPGSFFCLCAPGFASAEGGTRCQ) folds into the EGF-like 12; calcium-binding domain. One can recognise an EGF-like 13; calcium-binding domain in the interval 1208–1248 (DVDECATTEPCLGGHCVNTEGSFNCLCETGFQPAPDSGECV). Positions 1249–1290 (DIDECANDTVCGNHGFCDNTDGSFRCLCDQGFETSPSGWECV) constitute an EGF-like 15; calcium-binding domain. N-linked (GlcNAc...) asparagine glycosylation is present at Asn-1255. Residues 1291–1333 (DVNECELMLAVCGDALCENVEGSFLCLCASDLEEYDAEEGHCR) enclose the EGF-like 16; calcium-binding domain. One can recognise a TB 3 domain in the interval 1357–1409 (MECYAEHNGGPPCSQILGQNSTQAECCSTQGARWGETCDPCPSEDSVEFSELC). A glycan (N-linked (GlcNAc...) asparagine) is linked at Asn-1376. Residues 1431–1473 (DADECILFGPALCQNGRCLNTVPGYICLCNPGYHYDAVSRKCQ) form the EGF-like 17; calcium-binding domain. Positions 1474–1513 (DHNECQDLACENGECVNTEGSFHCFCSPPLILDLSGQRCV) constitute an EGF-like 18; calcium-binding domain. Asn-1514 is a glycosylation site (N-linked (GlcNAc...) asparagine). Positions 1530-1582 (DICWKKVTNDVCSQPLRGHHTTYTECCCQDGEAWSQQCALCPPRSSEVYAQLC) constitute a TB 4 domain. Disulfide bonds link Cys-1532/Cys-1555, Cys-1541/Cys-1567, Cys-1556/Cys-1570, Cys-1557/Cys-1582, Cys-1680/Cys-1691, Cys-1686/Cys-1700, Cys-1702/Cys-1715, Cys-1721/Cys-1736, Cys-1731/Cys-1745, and Cys-1747/Cys-1760. The interval 1585–1764 (ARIEAEREAG…PGPPHCAAKE (180 aa)) is C-terminal domain. Residues 1676 to 1716 (QAEECGILNGCENGRCVRVREGYTCDCFEGFQLDTALMACV) form the EGF-like 19; calcium-binding domain. Residues 1717 to 1761 (DVNECEDLNGAARLCAHGHCENTEGSYRCHCSPGYVAEPGPPHCA) enclose the EGF-like 20; calcium-binding domain.

Belongs to the LTBP family. As to quaternary structure, forms part of the large latent transforming growth factor beta precursor complex; removal is essential for activation of complex. Interacts with SDC4. Interacts (via C-terminal domain) with FBN1 (via N-terminal domain) in a Ca(+2)-dependent manner. In terms of processing, N-Glycosylated. Contains hydroxylated asparagine residues. As to expression, expressed in cortical astrocytes and glioma cells. Expression is up-regulated by TGFB1.

Its subcellular location is the secreted. The protein resides in the extracellular space. It is found in the extracellular matrix. Functionally, may play an integral structural role in elastic-fiber architectural organization and/or assembly. In Rattus norvegicus (Rat), this protein is Latent-transforming growth factor beta-binding protein 2 (Ltbp2).